A 526-amino-acid polypeptide reads, in one-letter code: Peptide chain release factor 3 (526 aa).

The 269-residue stretch at 9 to 277 folds into the tr-type G domain; the sequence is ERRRTFAIIS…AFAEYAPPPQ (269 aa). GTP-binding positions include 18 to 25, 86 to 90, and 140 to 143; these read SHPDAGKT, DTPGH, and NKLD.

Belongs to the TRAFAC class translation factor GTPase superfamily. Classic translation factor GTPase family. PrfC subfamily.

It localises to the cytoplasm. Increases the formation of ribosomal termination complexes and stimulates activities of RF-1 and RF-2. It binds guanine nucleotides and has strong preference for UGA stop codons. It may interact directly with the ribosome. The stimulation of RF-1 and RF-2 is significantly reduced by GTP and GDP, but not by GMP. The protein is Peptide chain release factor 3 of Methylococcus capsulatus (strain ATCC 33009 / NCIMB 11132 / Bath).